A 123-amino-acid chain; its full sequence is Immunoglobulin heavy variable 4-34 (123 aa).

The signal sequence occupies residues 1 to 26 (MDLLHKNMKHLWFFLLLVAAPRWVLS). The v region stretch occupies residues 26–123 (SQVQLQQWGA…ADTAVYYCAR (98 aa)). A framework-1 region spans residues 27-51 (QVQLQQWGAGLLKPSETLSLTCAVY). Residues 27–123 (QVQLQQWGAG…ADTAVYYCAR (97 aa)) form the Ig-like domain. Residues C48 and C121 are joined by a disulfide bond. Residues 52-59 (GGSFSGYY) form a complementarity-determining-1 region. The segment at 60–76 (WSWIRQPPGKGLEWIGE) is framework-2. The interval 77–83 (INHSGST) is complementarity-determining-2. N-linked (GlcNAc...) asparagine glycosylation occurs at N78. Positions 84-121 (NYNPSLKSRVTISVDTSKNQFSLKLSSVTAADTAVYYC) are framework-3. The complementarity-determining-3 stretch occupies residues 122–123 (AR).

As to quaternary structure, immunoglobulins are composed of two identical heavy chains and two identical light chains; disulfide-linked.

The protein resides in the secreted. It localises to the cell membrane. Its function is as follows. V region of the variable domain of immunoglobulin heavy chains that participates in the antigen recognition. Immunoglobulins, also known as antibodies, are membrane-bound or secreted glycoproteins produced by B lymphocytes. In the recognition phase of humoral immunity, the membrane-bound immunoglobulins serve as receptors which, upon binding of a specific antigen, trigger the clonal expansion and differentiation of B lymphocytes into immunoglobulins-secreting plasma cells. Secreted immunoglobulins mediate the effector phase of humoral immunity, which results in the elimination of bound antigens. The antigen binding site is formed by the variable domain of one heavy chain, together with that of its associated light chain. Thus, each immunoglobulin has two antigen binding sites with remarkable affinity for a particular antigen. The variable domains are assembled by a process called V-(D)-J rearrangement and can then be subjected to somatic hypermutations which, after exposure to antigen and selection, allow affinity maturation for a particular antigen. The protein is Immunoglobulin heavy variable 4-34 of Homo sapiens (Human).